A 321-amino-acid chain; its full sequence is Epoxyqueuosine reductase (321 aa).

Asp137 acts as the Proton donor in catalysis. In terms of domain architecture, 4Fe-4S ferredoxin-type spans 179-211 (EPLNADPPARSLCGRCSACIDACPTHAIREPFV). [4Fe-4S] cluster contacts are provided by Cys191, Cys194, Cys197, Cys201, Cys217, Cys245, Cys248, and Cys252.

It belongs to the QueG family. As to quaternary structure, monomer. Requires cob(II)alamin as cofactor. [4Fe-4S] cluster is required as a cofactor.

The protein resides in the cytoplasm. It carries out the reaction epoxyqueuosine(34) in tRNA + AH2 = queuosine(34) in tRNA + A + H2O. The protein operates within tRNA modification; tRNA-queuosine biosynthesis. Catalyzes the conversion of epoxyqueuosine (oQ) to queuosine (Q), which is a hypermodified base found in the wobble positions of tRNA(Asp), tRNA(Asn), tRNA(His) and tRNA(Tyr). This chain is Epoxyqueuosine reductase, found in Synechococcus sp. (strain CC9605).